The following is a 267-amino-acid chain: Large ribosomal subunit protein uL3 (267 aa).

The interval 124–147 (NQHIGPKSHGGGGGSQPVRQTGSL) is disordered.

It belongs to the universal ribosomal protein uL3 family. As to quaternary structure, part of the 50S ribosomal subunit. Forms a cluster with proteins L14 and L19.

One of the primary rRNA binding proteins, it binds directly near the 3'-end of the 23S rRNA, where it nucleates assembly of the 50S subunit. This Mycoplasmopsis agalactiae (strain NCTC 10123 / CIP 59.7 / PG2) (Mycoplasma agalactiae) protein is Large ribosomal subunit protein uL3.